The following is a 231-amino-acid chain: Ribose-5-phosphate isomerase A (231 aa).

Substrate is bound by residues T28–T31, D83–D86, and K96–G99. The active-site Proton acceptor is E105. K123 is a binding site for substrate.

It belongs to the ribose 5-phosphate isomerase family. In terms of assembly, homodimer.

It carries out the reaction aldehydo-D-ribose 5-phosphate = D-ribulose 5-phosphate. Its pathway is carbohydrate degradation; pentose phosphate pathway; D-ribose 5-phosphate from D-ribulose 5-phosphate (non-oxidative stage): step 1/1. In terms of biological role, catalyzes the reversible conversion of ribose-5-phosphate to ribulose 5-phosphate. This Parvibaculum lavamentivorans (strain DS-1 / DSM 13023 / NCIMB 13966) protein is Ribose-5-phosphate isomerase A.